The chain runs to 190 residues: MAQNGSESGSTLGGVAGRYASALFELARDERAVDAVTEGLDRFDALLRESADLQRLVRSPVFSTEEQVKAVEAVLARAGITGLAANFIRLAAANRRLFVLPDMIRAYRVLVREAKGIVRAEVRLAEPPSDAVLEEIKASLRDVARAEVELDLRVDPSLIGGIVVKLGSRMVDASLRTRLNSIRLAMRDAR.

It belongs to the ATPase delta chain family. F-type ATPases have 2 components, F(1) - the catalytic core - and F(0) - the membrane proton channel. F(1) has five subunits: alpha(3), beta(3), gamma(1), delta(1), epsilon(1). F(0) has three main subunits: a(1), b(2) and c(10-14). The alpha and beta chains form an alternating ring which encloses part of the gamma chain. F(1) is attached to F(0) by a central stalk formed by the gamma and epsilon chains, while a peripheral stalk is formed by the delta and b chains.

The protein localises to the cell inner membrane. F(1)F(0) ATP synthase produces ATP from ADP in the presence of a proton or sodium gradient. F-type ATPases consist of two structural domains, F(1) containing the extramembraneous catalytic core and F(0) containing the membrane proton channel, linked together by a central stalk and a peripheral stalk. During catalysis, ATP synthesis in the catalytic domain of F(1) is coupled via a rotary mechanism of the central stalk subunits to proton translocation. In terms of biological role, this protein is part of the stalk that links CF(0) to CF(1). It either transmits conformational changes from CF(0) to CF(1) or is implicated in proton conduction. This is ATP synthase subunit delta from Methylobacterium sp. (strain 4-46).